We begin with the raw amino-acid sequence, 449 residues long: MNNSKSNLLDTEHGDKVAEQMNLASMDCLPDDLLVQILYFLPTKEAISTSLLSKRWRTLYSLVHNLDLDDYIFWHHEDGYNQYFSNDIQKSFEEFMERTLALLGGGHIKTFSLISDEIYRFDHVVDSIRPWLYYNLQKDSLWQFGFPYKVFTSTKLVKLSLGTRLACPRIPQDTSLPVLKVLLLEYIWFEDNQLSDVFLAACPALEDLTIHHMFRPFLISSKNLKKLSVTINFSYYVDRSTILTLDTPNVVDLYYSDFPRPIAPHCHLDSLAKVELDLHSLEDDSRQVQNDADVKNLISEIRNVKTLHLTYSAVELMLSSKKRDWKVLPLLLERSPNLKTLVLSGLNRYTFGRRHRFVGIQIPSSNKIKMLSIKQYQGSATELKHISHLLLKMECLELVKVYLATEMDDLKKMQLTEDVVKLPAASSKIVEKLKAFGAKAVLERVSFLD.

In terms of domain architecture, F-box spans 23 to 77 (LASMDCLPDDLLVQILYFLPTKEAISTSLLSKRWRTLYSLVHNLDLDDYIFWHHE). LRR repeat units follow at residues 133 to 163 (YYNL…SLGT), 186 to 212 (YIWF…TIHH), 214 to 231 (FRPF…SVTI), 247 to 278 (TPNV…ELDL), 286 to 311 (RQVQ…HLTY), and 320 to 345 (SKKR…VLSG).

The sequence is that of Putative F-box/LRR-repeat protein At3g44090 from Arabidopsis thaliana (Mouse-ear cress).